We begin with the raw amino-acid sequence, 186 residues long: Ribosome-recycling factor (186 aa).

Belongs to the RRF family.

Its subcellular location is the cytoplasm. Functionally, responsible for the release of ribosomes from messenger RNA at the termination of protein biosynthesis. May increase the efficiency of translation by recycling ribosomes from one round of translation to another. The sequence is that of Ribosome-recycling factor from Cupriavidus metallidurans (strain ATCC 43123 / DSM 2839 / NBRC 102507 / CH34) (Ralstonia metallidurans).